The primary structure comprises 129 residues: UPF0325 protein HCH_00487 (129 aa).

Belongs to the UPF0325 family.

This is UPF0325 protein HCH_00487 from Hahella chejuensis (strain KCTC 2396).